The sequence spans 172 residues: Shikimate kinase (172 aa).

12–17 is a binding site for ATP; that stretch reads GSGKTS. Thr-16 is a binding site for Mg(2+). Asp-34, Arg-58, and Gly-81 together coordinate substrate. Arg-122 provides a ligand contact to ATP. Arg-139 provides a ligand contact to substrate.

The protein belongs to the shikimate kinase family. In terms of assembly, monomer. Mg(2+) serves as cofactor.

It localises to the cytoplasm. It carries out the reaction shikimate + ATP = 3-phosphoshikimate + ADP + H(+). The protein operates within metabolic intermediate biosynthesis; chorismate biosynthesis; chorismate from D-erythrose 4-phosphate and phosphoenolpyruvate: step 5/7. In terms of biological role, catalyzes the specific phosphorylation of the 3-hydroxyl group of shikimic acid using ATP as a cosubstrate. The polypeptide is Shikimate kinase (Dictyoglomus turgidum (strain DSM 6724 / Z-1310)).